The primary structure comprises 418 residues: MLSKKLTVDKIPHMIKNKRVLVRVDFNVPIKDGKVADPTRIVSTLDTINFLKENGAKSIVLMSHLGRPKGVRQEQFSLAPVVPALEDIIGQKVNFLNDCIGTEVEGEVANTKDGNILLLENLRFYLEEEGKGVINGEKVKADPTKVESFRSQLTRLGDLYVNDAFGTCHRAHSSMVGVNVDTRAAGFLLKKELDYFSKVLEDPKRPLTVILGGAKVADKIQLINNLLDLADEMIIGGGMAFTFNKVLNNTPIGASLYDEEGAKTVHGIMEKAKEKGVKIHIPSDFVCAESFAEDAKFAYKLKMKESQDGWLGLDIGDKTIRSFDEVIRRSNTLFWNGPSGVFEWKNFAKGSHAMLQAVTESTKNGTVSVCGGGDTLNLLKQVDGAKENISHVSTGGGASLELVEGKELPGIKALSDIN.

13 residues coordinate (2R)-3-phosphoglycerate: valine 24, aspartate 25, phenylalanine 26, asparagine 27, arginine 40, serine 63, histidine 64, glycine 66, arginine 67, leucine 122, arginine 123, histidine 169, and arginine 170. Residue glycine 213 participates in ADP binding. Residue glycine 213 coordinates CDP. 2 residues coordinate AMP: alanine 214 and lysine 215. Alanine 214 serves as a coordination point for ATP. Alanine 214 serves as a coordination point for Mg(2+). Mg(2+) contacts are provided by alanine 217 and aspartate 218. Aspartate 218 contributes to the CDP binding site. Residue lysine 219 participates in AMP binding. Lysine 219 lines the ATP pocket. Residue glycine 237 coordinates ADP. Position 237 (glycine 237) interacts with CDP. 2 residues coordinate AMP: glycine 238 and glycine 312. 2 residues coordinate ATP: glycine 238 and glycine 312. Glycine 337 and phenylalanine 342 together coordinate CDP. Phenylalanine 342 serves as a coordination point for ADP. Glutamate 343 contributes to the AMP binding site. Positions 343, 374, and 375 each coordinate ATP. Aspartate 374 contributes to the Mg(2+) binding site.

The protein belongs to the phosphoglycerate kinase family. As to quaternary structure, monomer. Requires Mg(2+) as cofactor.

The enzyme catalyses (2R)-3-phosphoglycerate + ATP = (2R)-3-phospho-glyceroyl phosphate + ADP. It functions in the pathway carbohydrate degradation; glycolysis; pyruvate from D-glyceraldehyde 3-phosphate: step 2/5. This chain is Phosphoglycerate kinase (PGK), found in Euplotes crassus.